Consider the following 150-residue polypeptide: MAKKPRVTKLNTDRRSRANERERQRVSEMNGMFDVLLNLLPPSHFKTRLSRVQILREATSYIIRLHNFLIESSNSDIDAITVFPHIFNGERKSNKDAIRRPMKLKQGGGVAAFISRHELPPLQLPNPVIPILKPTSVPVWPQTNVYIAYF.

A disordered region spans residues 1–24 (MAKKPRVTKLNTDRRSRANERERQ). Basic and acidic residues predominate over residues 11–24 (NTDRRSRANERERQ). Positions 13 to 26 (DRRSRANERERQRV) are basic motif. A bHLH domain is found at 13–65 (DRRSRANERERQRVSEMNGMFDVLLNLLPPSHFKTRLSRVQILREATSYIIRL). The segment at 27–65 (SEMNGMFDVLLNLLPPSHFKTRLSRVQILREATSYIIRL) is helix-loop-helix motif.

As to quaternary structure, forms a heterodimer with helix-loop-helix protein hlh-2.

The protein resides in the nucleus. In terms of biological role, transcription factor which binds the E box motif 5'-GCAGGTG-3'. Involved in migration of the gonadal leader cells; distal tip cells (DTCs) in hermaphrodites, and linker cells in males. Positively regulates expression of alpha integrin ina-1 and ADAMTS protease gon-1. This chain is Helix-loop-helix protein hlh-12, found in Caenorhabditis elegans.